The primary structure comprises 345 residues: Histone H3-like centromeric protein cpar-1 (345 aa).

A disordered region spans residues 117–246; sequence NHSNRKPLEE…SRVTKTHNRK (130 aa). A compositionally biased stretch (basic and acidic residues) spans 122-149; that stretch reads KPLEESRRREEPRDRVHESNIDITHRGD. Residues 233-246 are compositionally biased toward basic residues; it reads RSGKSRVTKTHNRK. Residues 263–340 are H3-like; that stretch reads STDMLIQKAP…TDIQLYRRLC (78 aa).

The protein belongs to the histone H3 family. Forms a nucleosome-like histone octamer containing two molecules each of H2A, H2B, cpar-1 and H4 assembled in one cpar-1-H4 heterotetramer and two H2A-H2B heterodimers. Post-translationally, cleaved at the onset of meiotic anaphase I, likely by separase sep-1.

Its subcellular location is the nucleus. The protein localises to the chromosome. Functionally, histone H3-like variant which exclusively replaces conventional H3 in the nucleosome core of centromeric chromatin at the inner plate of the kinetochore. Required for recruitment and assembly of kinetochore proteins, mitotic progression and chromosome segregation. May serve as an epigenetic mark that propagates centromere identity through replication and cell division. Not required for chromosome segregation during meiosis. This chain is Histone H3-like centromeric protein cpar-1, found in Caenorhabditis briggsae.